A 302-amino-acid polypeptide reads, in one-letter code: NmrA-like family domain-containing protein DDB_G0286605 (302 aa).

Residues G9–Q14, R35–S39, D56–E57, T78–S80, K130, and Y157–N160 contribute to the NADP(+) site.

Belongs to the NmrA-type oxidoreductase family.

May be a redox sensor protein. The sequence is that of NmrA-like family domain-containing protein DDB_G0286605 from Dictyostelium discoideum (Social amoeba).